Here is a 49-residue protein sequence, read N- to C-terminus: Large ribosomal subunit protein eL40 (49 aa).

Belongs to the eukaryotic ribosomal protein eL40 family.

In Methanosarcina barkeri (strain Fusaro / DSM 804), this protein is Large ribosomal subunit protein eL40.